The chain runs to 76 residues: ATP synthase subunit 9, mitochondrial (76 aa).

The next 2 membrane-spanning stretches (helical) occupy residues 11-31 (IGAG…GIVF) and 53-73 (ILGF…AFLI).

The protein belongs to the ATPase C chain family. As to quaternary structure, F-type ATPases have 2 components, CF(1) - the catalytic core - and CF(0) - the membrane proton channel. CF(1) has five subunits: alpha(3), beta(3), gamma(1), delta(1), epsilon(1). CF(0) has three main subunits: a, b and c.

It is found in the mitochondrion membrane. This protein is one of the chains of the nonenzymatic membrane component (F0) of mitochondrial ATPase. The chain is ATP synthase subunit 9, mitochondrial (ATP9) from Chondrus crispus (Carrageen Irish moss).